Here is a 359-residue protein sequence, read N- to C-terminus: Probable D-xylulose reductase A (359 aa).

Cysteine 47, histidine 72, and glutamate 73 together coordinate Zn(2+). 182–187 (GAGPVG) is a binding site for NAD(+).

Belongs to the zinc-containing alcohol dehydrogenase family. Zn(2+) is required as a cofactor.

It carries out the reaction xylitol + NAD(+) = D-xylulose + NADH + H(+). It functions in the pathway carbohydrate degradation; L-arabinose degradation via L-arabinitol; D-xylulose 5-phosphate from L-arabinose (fungal route): step 4/5. In terms of biological role, xylitol dehydrogenase which catalyzes the conversion of xylitol to D-xylulose. Xylose is a major component of hemicelluloses such as xylan. Most fungi utilize D-xylose via three enzymatic reactions, xylose reductase (XR), xylitol dehydrogenase (XDH), and xylulokinase, to form xylulose 5-phosphate, which enters pentose phosphate pathway. The chain is Probable D-xylulose reductase A (xdhA) from Emericella nidulans (strain FGSC A4 / ATCC 38163 / CBS 112.46 / NRRL 194 / M139) (Aspergillus nidulans).